Consider the following 124-residue polypeptide: FK506-binding protein 1 (124 aa).

Positions 23-122 (GDTVTIHYDG…VFEVELLGVN (100 aa)) constitute a PPIase FKBP-type domain.

It belongs to the FKBP-type PPIase family. FKBP1 subfamily.

The protein localises to the cytoplasm. The catalysed reaction is [protein]-peptidylproline (omega=180) = [protein]-peptidylproline (omega=0). With respect to regulation, inhibited by rapamycin. Functionally, PPIases accelerate the folding of proteins. It catalyzes the cis-trans isomerization of proline imidic peptide bonds in oligopeptides. In Candida albicans (strain SC5314 / ATCC MYA-2876) (Yeast), this protein is FK506-binding protein 1 (RBP1).